We begin with the raw amino-acid sequence, 387 residues long: Alkanesulfonate monooxygenase (387 aa).

Belongs to the SsuD family.

It carries out the reaction an alkanesulfonate + FMNH2 + O2 = an aldehyde + FMN + sulfite + H2O + 2 H(+). Functionally, catalyzes the desulfonation of aliphatic sulfonates. The chain is Alkanesulfonate monooxygenase from Cupriavidus pinatubonensis (strain JMP 134 / LMG 1197) (Cupriavidus necator (strain JMP 134)).